The chain runs to 464 residues: 3-isopropylmalate dehydratase large subunit (464 aa).

The [4Fe-4S] cluster site is built by C337, C397, and C400.

Belongs to the aconitase/IPM isomerase family. LeuC type 1 subfamily. As to quaternary structure, heterodimer of LeuC and LeuD. [4Fe-4S] cluster is required as a cofactor.

The catalysed reaction is (2R,3S)-3-isopropylmalate = (2S)-2-isopropylmalate. It participates in amino-acid biosynthesis; L-leucine biosynthesis; L-leucine from 3-methyl-2-oxobutanoate: step 2/4. Its function is as follows. Catalyzes the isomerization between 2-isopropylmalate and 3-isopropylmalate, via the formation of 2-isopropylmaleate. This is 3-isopropylmalate dehydratase large subunit from Bacillus cereus (strain ATCC 10987 / NRS 248).